A 553-amino-acid chain; its full sequence is Terpene synthase 16 (553 aa).

3 residues coordinate Mg(2+): D303, D307, and E457. The DDXXD motif motif lies at 303–307; sequence DDTYD.

Belongs to the terpene synthase family. Tpsa subfamily. The cofactor is Mg(2+). Mn(2+) is required as a cofactor. Expressed in leaves, trichomes and flowers.

The protein operates within secondary metabolite biosynthesis; terpenoid biosynthesis. Sesquiterpene synthase involved in the biosynthesis of volatile compounds. No activity detected with geranyl diphosphate (GPP) and farnesyl diphosphate (FPP) as substrates. The chain is Terpene synthase 16 from Solanum lycopersicum (Tomato).